The primary structure comprises 308 residues: GTP cyclohydrolase MptA (308 aa).

The disordered stretch occupies residues 282-308 (NDESIHQHNAHAEREVTLGQLRDELDA).

This sequence belongs to the GTP cyclohydrolase IV family. Homodimer. Requires Fe(2+) as cofactor.

It carries out the reaction GTP + H2O = 7,8-dihydroneopterin 2',3'-cyclic phosphate + formate + diphosphate + H(+). It participates in cofactor biosynthesis; 5,6,7,8-tetrahydromethanopterin biosynthesis. Functionally, converts GTP to 7,8-dihydro-D-neopterin 2',3'-cyclic phosphate, the first intermediate in the biosynthesis of coenzyme methanopterin. Involved in archaeosine (G(+)) and folate biosynthesis. In Haloferax volcanii (strain ATCC 29605 / DSM 3757 / JCM 8879 / NBRC 14742 / NCIMB 2012 / VKM B-1768 / DS2) (Halobacterium volcanii), this protein is GTP cyclohydrolase MptA.